The chain runs to 154 residues: Endoribonuclease YbeY (154 aa).

Positions 113, 117, and 123 each coordinate Zn(2+).

This sequence belongs to the endoribonuclease YbeY family. Requires Zn(2+) as cofactor.

The protein resides in the cytoplasm. In terms of biological role, single strand-specific metallo-endoribonuclease involved in late-stage 70S ribosome quality control and in maturation of the 3' terminus of the 16S rRNA. This chain is Endoribonuclease YbeY, found in Vibrio vulnificus (strain YJ016).